The following is a 427-amino-acid chain: tRNA(Ile)-lysidine synthase (427 aa).

ATP is bound at residue 25-30 (SGGLDS).

Belongs to the tRNA(Ile)-lysidine synthase family.

The protein localises to the cytoplasm. It catalyses the reaction cytidine(34) in tRNA(Ile2) + L-lysine + ATP = lysidine(34) in tRNA(Ile2) + AMP + diphosphate + H(+). Its function is as follows. Ligates lysine onto the cytidine present at position 34 of the AUA codon-specific tRNA(Ile) that contains the anticodon CAU, in an ATP-dependent manner. Cytidine is converted to lysidine, thus changing the amino acid specificity of the tRNA from methionine to isoleucine. The polypeptide is tRNA(Ile)-lysidine synthase (Histophilus somni (strain 2336) (Haemophilus somnus)).